The chain runs to 353 residues: Peptide methionine sulfoxide reductase MsrA/MsrB (353 aa).

Positions 43 to 196 (REIYLAGGCF…PNGYCHIDIT (154 aa)) are peptide methionine sulfoxide reductase A. Residue Cys-51 is part of the active site. Positions 213-336 (DAELKAKLTP…NSASIKFIPL (124 aa)) constitute a MsrB domain. The active-site Nucleophile is the Cys-325.

It in the N-terminal section; belongs to the MsrA Met sulfoxide reductase family. The protein in the C-terminal section; belongs to the MsrB Met sulfoxide reductase family.

The catalysed reaction is L-methionyl-[protein] + [thioredoxin]-disulfide + H2O = L-methionyl-(S)-S-oxide-[protein] + [thioredoxin]-dithiol. The enzyme catalyses [thioredoxin]-disulfide + L-methionine + H2O = L-methionine (S)-S-oxide + [thioredoxin]-dithiol. It catalyses the reaction L-methionyl-[protein] + [thioredoxin]-disulfide + H2O = L-methionyl-(R)-S-oxide-[protein] + [thioredoxin]-dithiol. Functionally, has an important function as a repair enzyme for proteins that have been inactivated by oxidation. Catalyzes the reversible oxidation-reduction of methionine sulfoxide in proteins to methionine. The sequence is that of Peptide methionine sulfoxide reductase MsrA/MsrB (msrAB) from Haemophilus influenzae (strain ATCC 51907 / DSM 11121 / KW20 / Rd).